A 792-amino-acid chain; its full sequence is Phenylalanine--tRNA ligase beta subunit (792 aa).

A tRNA-binding domain is found at 39 to 150; sequence APAFHKVVVA…PDAPVGTDFR (112 aa). The region spanning 405–480 is the B5 domain; the sequence is PARDPIRLGL…RMYGYNRIAA (76 aa). The Mg(2+) site is built by D458, D464, E467, and E468. The FDX-ACB domain occupies 698 to 791; that stretch reads SKYPPIRRDI…LENRFGARLR (94 aa).

Belongs to the phenylalanyl-tRNA synthetase beta subunit family. Type 1 subfamily. In terms of assembly, tetramer of two alpha and two beta subunits. The cofactor is Mg(2+).

The protein resides in the cytoplasm. The catalysed reaction is tRNA(Phe) + L-phenylalanine + ATP = L-phenylalanyl-tRNA(Phe) + AMP + diphosphate + H(+). This chain is Phenylalanine--tRNA ligase beta subunit, found in Nitrosospira multiformis (strain ATCC 25196 / NCIMB 11849 / C 71).